Reading from the N-terminus, the 404-residue chain is Cysteine desulfurase IscS (404 aa).

Pyridoxal 5'-phosphate is bound by residues 75–76 (AT), Asn-155, Gln-183, and 203–205 (SAH). An N6-(pyridoxal phosphate)lysine modification is found at Lys-206. Residue Thr-243 participates in pyridoxal 5'-phosphate binding. Cys-328 serves as the catalytic Cysteine persulfide intermediate. Cys-328 is a binding site for [2Fe-2S] cluster.

The protein belongs to the class-V pyridoxal-phosphate-dependent aminotransferase family. NifS/IscS subfamily. Homodimer. Forms a heterotetramer with IscU, interacts with other sulfur acceptors. Pyridoxal 5'-phosphate is required as a cofactor.

The protein resides in the cytoplasm. The catalysed reaction is (sulfur carrier)-H + L-cysteine = (sulfur carrier)-SH + L-alanine. The protein operates within cofactor biosynthesis; iron-sulfur cluster biosynthesis. Functionally, master enzyme that delivers sulfur to a number of partners involved in Fe-S cluster assembly, tRNA modification or cofactor biosynthesis. Catalyzes the removal of elemental sulfur atoms from cysteine to produce alanine. Functions as a sulfur delivery protein for Fe-S cluster synthesis onto IscU, an Fe-S scaffold assembly protein, as well as other S acceptor proteins. The polypeptide is Cysteine desulfurase IscS (Aeromonas salmonicida (strain A449)).